Reading from the N-terminus, the 292-residue chain is Acetylglutamate kinase (292 aa).

Substrate-binding positions include glycine 64–glycine 65, arginine 86, and asparagine 190.

This sequence belongs to the acetylglutamate kinase family. ArgB subfamily.

The protein resides in the cytoplasm. It catalyses the reaction N-acetyl-L-glutamate + ATP = N-acetyl-L-glutamyl 5-phosphate + ADP. The protein operates within amino-acid biosynthesis; L-arginine biosynthesis; N(2)-acetyl-L-ornithine from L-glutamate: step 2/4. Its function is as follows. Catalyzes the ATP-dependent phosphorylation of N-acetyl-L-glutamate. This Geotalea uraniireducens (strain Rf4) (Geobacter uraniireducens) protein is Acetylglutamate kinase.